The following is a 460-amino-acid chain: Lipase member I (460 aa).

Residues 1-15 (MRVYIFLCLMCWVRS) form the signal peptide. N63 carries an N-linked (GlcNAc...) asparagine glycan. The active-site Nucleophile is S159. The active-site Charge relay system is the D183. A disulfide bridge links C238 with C251. Residue H253 is the Charge relay system of the active site. Disulfide bonds link C275-C286 and C289-C297. N396 carries an N-linked (GlcNAc...) asparagine glycan. An intrachain disulfide couples C436 to C455.

Belongs to the AB hydrolase superfamily. Lipase family. In terms of assembly, interacts with heparin with a high affinity. In terms of tissue distribution, expressed in testis. Expressed exclusively at the connecting piece of the sperm.

The protein localises to the cell membrane. It is found in the secreted. It carries out the reaction 1-hexadecanoyl-2-(9Z-octadecenoyl)-sn-glycero-3-phosphate + H2O = 2-(9Z-octadecenoyl)-sn-glycero-3-phosphate + hexadecanoate + H(+). With respect to regulation, inhibited by sodium vanadate. Functionally, hydrolyzes specifically phosphatidic acid (PA) to produce 2-acyl lysophosphatidic acid (LPA; a potent bioactive lipid mediator) and fatty acid. Does not hydrolyze other phospholipids, like phosphatidylserine (PS), phosphatidylcholine (PC) and phosphatidylethanolamine (PE) or triacylglycerol (TG). This is Lipase member I (LIPI) from Homo sapiens (Human).